We begin with the raw amino-acid sequence, 137 residues long: Venom allergen 4 (137 aa).

Positions 1–19 are cleaved as a signal peptide; sequence MKTFVLVSCLLVFTQIIYA.

It belongs to the ant venom allergen 2/4 family. As to quaternary structure, monomer. In terms of tissue distribution, expressed by the venom gland.

It is found in the secreted. The protein is Venom allergen 4 of Solenopsis invicta (Red imported fire ant).